The following is a 296-amino-acid chain: Probable endonuclease 4 (296 aa).

Zn(2+)-binding residues include histidine 68, histidine 109, glutamate 144, aspartate 178, histidine 181, histidine 213, aspartate 226, histidine 228, and glutamate 258.

Belongs to the AP endonuclease 2 family. Zn(2+) serves as cofactor.

The catalysed reaction is Endonucleolytic cleavage to 5'-phosphooligonucleotide end-products.. Its function is as follows. Endonuclease IV plays a role in DNA repair. It cleaves phosphodiester bonds at apurinic or apyrimidinic (AP) sites, generating a 3'-hydroxyl group and a 5'-terminal sugar phosphate. This chain is Probable endonuclease 4, found in Staphylococcus aureus (strain NCTC 8325 / PS 47).